Consider the following 125-residue polypeptide: E4-ORF1 (125 aa).

Positions 122 to 125 match the PDZ-binding motif; it reads ATLV.

Belongs to the dUTPase family. In terms of assembly, binds to human MPDZ.

It localises to the host cytoplasm. The catalysed reaction is dUTP + H2O = dUMP + diphosphate + H(+). Functionally, plays a key role in virus oncogenecity in animals. Binds and sequesters human MUPP1/MPDZ protein in the cytoplasm, preventing it from playing a role in cellular proliferation regulation. Induces cell transformation, probably by inactivating MPDZ protein. This is E4-ORF1 (E4) from Homo sapiens (Human).